Consider the following 153-residue polypeptide: uncharacterized protein (153 aa).

2 disordered regions span residues 24-87 (PEDS…DRPL) and 101-153 (GDPR…RIPS). The segment covering 27–37 (SSCPCPRLPLS) has biased composition (low complexity). Residues 143–153 (TRKESSCRIPS) show a composition bias toward basic and acidic residues.

This is an uncharacterized protein from Dryophytes versicolor (chameleon treefrog).